A 342-amino-acid polypeptide reads, in one-letter code: Tetraacyldisaccharide 4'-kinase (342 aa).

68–75 is a binding site for ATP; sequence TVGGTGKT.

Belongs to the LpxK family.

It carries out the reaction a lipid A disaccharide + ATP = a lipid IVA + ADP + H(+). It functions in the pathway glycolipid biosynthesis; lipid IV(A) biosynthesis; lipid IV(A) from (3R)-3-hydroxytetradecanoyl-[acyl-carrier-protein] and UDP-N-acetyl-alpha-D-glucosamine: step 6/6. Its function is as follows. Transfers the gamma-phosphate of ATP to the 4'-position of a tetraacyldisaccharide 1-phosphate intermediate (termed DS-1-P) to form tetraacyldisaccharide 1,4'-bis-phosphate (lipid IVA). This Burkholderia cenocepacia (strain ATCC BAA-245 / DSM 16553 / LMG 16656 / NCTC 13227 / J2315 / CF5610) (Burkholderia cepacia (strain J2315)) protein is Tetraacyldisaccharide 4'-kinase.